The sequence spans 506 residues: Heat stress transcription factor A-1 (506 aa).

The stretch at 157 to 207 (MEEEIEMLKRDKNVLMQELVRLRQQQQTTDHQLQTLGKRLQGMEQRQQQMM) forms a coiled coil. The tract at residues 164 to 214 (LKRDKNVLMQELVRLRQQQQTTDHQLQTLGKRLQGMEQRQQQMMSFLAKAM) is hydrophobic repeat HR-A/B. The segment at 231-254 (RRRIVASNKKRRLPKQDGSLDSES) is disordered. Positions 232-243 (RRIVASNKKRRL) are enriched in basic residues. A Nuclear localization signal motif is present at residues 239–242 (KKRR). Positions 449–456 (DSFWEQFL) match the AHA motif.

It belongs to the HSF family. Class A subfamily. Homotrimer. Exhibits temperature-dependent phosphorylation.

The protein localises to the nucleus. Transcriptional regulator that specifically binds DNA of heat shock promoter elements (HSE). This chain is Heat stress transcription factor A-1 (HSFA1), found in Oryza sativa subsp. japonica (Rice).